A 449-amino-acid polypeptide reads, in one-letter code: Methylenetetrahydrofolate--tRNA-(uracil-5-)-methyltransferase TrmFO (449 aa).

Residue 10-15 (GGGLAG) participates in FAD binding.

It belongs to the MnmG family. TrmFO subfamily. FAD serves as cofactor.

The protein resides in the cytoplasm. The enzyme catalyses uridine(54) in tRNA + (6R)-5,10-methylene-5,6,7,8-tetrahydrofolate + NADH + H(+) = 5-methyluridine(54) in tRNA + (6S)-5,6,7,8-tetrahydrofolate + NAD(+). It carries out the reaction uridine(54) in tRNA + (6R)-5,10-methylene-5,6,7,8-tetrahydrofolate + NADPH + H(+) = 5-methyluridine(54) in tRNA + (6S)-5,6,7,8-tetrahydrofolate + NADP(+). In terms of biological role, catalyzes the folate-dependent formation of 5-methyl-uridine at position 54 (M-5-U54) in all tRNAs. This Sphingopyxis alaskensis (strain DSM 13593 / LMG 18877 / RB2256) (Sphingomonas alaskensis) protein is Methylenetetrahydrofolate--tRNA-(uracil-5-)-methyltransferase TrmFO.